The sequence spans 165 residues: Small ribosomal subunit protein uS5 (165 aa).

Residues 13–76 (LEENVVSINR…EDAKRHLIKV (64 aa)) form the S5 DRBM domain.

This sequence belongs to the universal ribosomal protein uS5 family. As to quaternary structure, part of the 30S ribosomal subunit. Contacts proteins S4 and S8.

Functionally, with S4 and S12 plays an important role in translational accuracy. In terms of biological role, located at the back of the 30S subunit body where it stabilizes the conformation of the head with respect to the body. This is Small ribosomal subunit protein uS5 from Oenococcus oeni (strain ATCC BAA-331 / PSU-1).